A 56-amino-acid polypeptide reads, in one-letter code: uncharacterized protein (56 aa).

This is an uncharacterized protein from Streptomyces lividans.